We begin with the raw amino-acid sequence, 434 residues long: F-box/FBD/LRR-repeat protein At3g26920 (434 aa).

An F-box domain is found at 16–65 (EDRISQLPEALLLQILSLLPTKEVVAVSVLAKRWRFLWKMVPSLEFFYYF). 7 LRR repeats span residues 69–95 (LERF…HLNM), 100–125 (DPRI…VLKV), 145–172 (TLEL…NLHE), 173–198 (VEFV…VIHQ), 219–244 (VIVE…KIEG), 265–290 (IIDV…SLKV), and 315–341 (TYKP…KIFD). An FBD domain is found at 353 to 403 (KWNEPKNVPECLLLHLETFVWTCYEGKLENEIELAKYILRNARRLKKATFS).

The chain is F-box/FBD/LRR-repeat protein At3g26920 from Arabidopsis thaliana (Mouse-ear cress).